We begin with the raw amino-acid sequence, 911 residues long: Transcription factor E2F7 (911 aa).

A Phosphoserine modification is found at S94. Residues 141–210 mediate DNA binding; sequence RKQKSLGLLC…VAKNQYSWHG (70 aa). 3 disordered regions span residues 239 to 281, 409 to 433, and 565 to 706; these read QKEL…ANSR, SFNS…PYRQ, and SPGS…SPLQ. The span at 243–257 shows a compositional bias: basic and acidic residues; it reads NPIDHKSGERRRDGC. A DNA-binding region spans residues 281-366; the sequence is RKDKSLKIMS…GRKPAFKWIG (86 aa). The residue at position 409 (S409) is a Phosphoserine. Residues 415–424 are compositionally biased toward basic and acidic residues; it reads ASERTQRKVN. Positions 566 to 579 are enriched in gly residues; sequence PGSGSGSGSVGGGS. Positions 599–621 are enriched in basic and acidic residues; the sequence is ERRLQEEEEEPATKRQCRDHEDG. Residues 669–687 show a composition bias toward polar residues; it reads KATTNGFVSSEWGNPCSNT. Residues 688-698 are compositionally biased toward basic and acidic residues; it reads EIEKPSEENES. S840 bears the Phosphoserine mark. Residues 873–911 are disordered; the sequence is FFKTPGSLGDPVLRRKERNQSRSSSSAQRRLEISSGGTD.

This sequence belongs to the E2F/DP family. Homodimer and heterodimer: mainly forms homodimers and, to a lesser extent, heterodimers with E2F8. Dimerization is important for DNA-binding. Interacts with HIF1A. Interacts with MN1.

It is found in the nucleus. Atypical E2F transcription factor that participates in various processes such as angiogenesis, polyploidization of specialized cells and DNA damage response. Mainly acts as a transcription repressor that binds DNA independently of DP proteins and specifically recognizes the E2 recognition site 5'-TTTC[CG]CGC-3'. Directly represses transcription of classical E2F transcription factors such as E2F1. Acts as a regulator of S-phase by recognizing and binding the E2-related site 5'-TTCCCGCC-3' and mediating repression of G1/S-regulated genes. Plays a key role in polyploidization of cells in placenta and liver by regulating the endocycle, probably by repressing genes promoting cytokinesis and antagonizing action of classical E2F proteins (E2F1, E2F2 and/or E2F3). Required for placental development by promoting polyploidization of trophoblast giant cells. Also involved in DNA damage response: up-regulated by p53/TP53 following genotoxic stress and acts as a downstream effector of p53/TP53-dependent repression by mediating repression of indirect p53/TP53 target genes involved in DNA replication. Acts as a promoter of sprouting angiogenesis, possibly by acting as a transcription activator: associates with HIF1A, recognizes and binds the VEGFA promoter, which is different from canonical E2 recognition site, and activates expression of the VEGFA gene. Acts as a negative regulator of keratinocyte differentiation. The chain is Transcription factor E2F7 (E2F7) from Bos taurus (Bovine).